The following is a 1233-amino-acid chain: Anion exchange protein 3 (1233 aa).

Pro residues predominate over residues 1-11; the sequence is MANGVIPPPGG. Disordered stretches follow at residues 1–320 and 431–500; these read MANG…RRPH and DDKD…DGHR. Residues 1-709 are Cytoplasmic-facing; it reads MANGVIPPPG…DLRDALHSQC (709 aa). Basic and acidic residues predominate over residues 58–73; the sequence is DPEKPSRSFSERDFAF. 2 stretches are compositionally biased toward basic residues: residues 74 to 97 and 104 to 113; these read HRHISHHTHHPLSARLPPPHKLRR and RHTRRKRKKE. Over residues 137 to 153 the composition is skewed to acidic residues; the sequence is GEEEEEEEEEGESETEA. Serine 168, serine 171, serine 176, and serine 199 each carry phosphoserine. Residues 201-216 show a composition bias toward low complexity; sequence QRSVSSSSPRARAPRV. The segment covering 268-290 has biased composition (basic and acidic residues); the sequence is DDMKSHRLEDNPGVRRHLVKEPS. The residue at position 296 (arginine 296) is an Omega-N-methylarginine. Residues 437-450 are compositionally biased toward low complexity; the sequence is SFPRNPSSSSVNSV. A compositionally biased stretch (basic and acidic residues) spans 482 to 500; it reads HDPDAKERPLHMPGGDGHR. Helical transmembrane passes span 710-732, 738-775, 795-817, and 827-848; these read VAAVLFIYFAALSPAITFGGLLG, LMGVSELIVSTAVLGVLFSLLGAQPLLVVGFSGPLLVF, VWVGLWLVVFVLALVGAEGTFLV, and IFAFLISLIFIYETFHKLYKVF. Positions 710–1233 are membrane (anion exchange); the sequence is VAAVLFIYFA…DEYNELHMPV (524 aa). Asparagine 874 is a glycosylation site (N-linked (GlcNAc...) asparagine). A helical transmembrane segment spans residues 894–911; the sequence is ALLSLILMLGTFLIAFFL. The Cytoplasmic portion of the chain corresponds to 912-926; the sequence is RKFRNSRFLGGKARR. The next 5 membrane-spanning stretches (helical) occupy residues 927–947, 981–1003, 1029–1050, 1084–1129, and 1156–1192; these read IIGDFGIPISILLMVLVDYSI, PFPPWMMVAAAVPALLVLILIFM, LLLIGSLGGLCGLFGLPWLTAA, VTGV…IQLS, and MHLFTCIQLACIALLWVVKSTAASLAFPFLLLLTVPL. Cysteine 1166 carries the S-palmitoyl cysteine lipid modification.

This sequence belongs to the anion exchanger (TC 2.A.31) family.

It is found in the cell membrane. It carries out the reaction hydrogencarbonate(in) + chloride(out) = hydrogencarbonate(out) + chloride(in). Its function is as follows. Sodium-independent anion exchanger which mediates the electroneutral exchange of chloride for bicarbonate ions across the cell membrane. May be involved in the regulation of intracellular pH, and the modulation of cardiac action potential. The protein is Anion exchange protein 3 (SLC4A3) of Oryctolagus cuniculus (Rabbit).